The primary structure comprises 937 residues: Hyphally-regulated protein (937 aa).

The first 20 residues, 1–20 (MKVVSNFIFTILLTLNLSAA), serve as a signal peptide directing secretion. Asn16 carries N-linked (GlcNAc...) asparagine glycosylation. The chain crosses the membrane as a helical span at residues 42–62 (VHSGATWAILGTTLCSFFGGL). Residue Asn236 is glycosylated (N-linked (GlcNAc...) asparagine). The tract at residues 332-483 (SAPESESDLN…QSITSSPGQS (152 aa)) is disordered. Over residues 344–392 (TTSSIETSSYSSAATESSVVSESSSAVDSLTSSSLSSKSESSDVVSSTT) the composition is skewed to low complexity. The span at 393-414 (NIESSSTAIETTMNSESSTDAG) shows a compositional bias: polar residues. The span at 415–475 (SSSISQSESS…SNALSSTEQS (61 aa)) shows a compositional bias: low complexity. N-linked (GlcNAc...) asparagine glycans are attached at residues Asn449, Asn488, Asn580, Asn585, Asn595, and Asn603. Residues 567-590 (DATTTTTTSTGGDNSTGGNESGSN) are compositionally biased toward low complexity. The segment at 567 to 857 (DATTTTTTST…VANPVTTSTE (291 aa)) is disordered. The span at 591 to 609 (HGPGNGSTEGSGNGSGAGS) shows a compositional bias: gly residues. Residues 610 to 613 (NEGS) form repeat 1. Positions 610–753 (NEGSQSGPNN…GAGNGSNEGS (144 aa)) are 7 X 4 AA repeats of N-E-G-S. 4 N-linked (GlcNAc...) asparagine glycosylation sites follow: Asn619, Asn631, Asn641, and Asn649. Gly residues-rich tracts occupy residues 619–631 (NGSG…GSNN) and 641–665 (NGSG…GSGS). Repeat copies occupy residues 666 to 669 (NEGS), 680 to 683 (NEGS), 690 to 693 (NEGS), and 698 to 701 (NEGS). Positions 666–682 (NEGSQSGSGSQPGPNEG) are enriched in low complexity. The segment covering 699–725 (EGSGSGSGSGSNNGSGSGSQSGSGSGS) has biased composition (gly residues). A glycan (N-linked (GlcNAc...) asparagine) is linked at Asn711. The segment covering 726-742 (QSGSESGSNSGSNEGSN) has biased composition (low complexity). Repeat 6 spans residues 738 to 741 (NEGS). Residues 743–801 (PGAGNGSNEGSGQGSGNGSEAGSGQGSGPNNGSGSGHNDGSGSGSNQGSNPGAGSGSGS) show a composition bias toward gly residues. The N-linked (GlcNAc...) asparagine glycan is linked to Asn747. Repeat 7 spans residues 750-753 (NEGS). 2 N-linked (GlcNAc...) asparagine glycosylation sites follow: Asn759 and Asn773. A compositionally biased stretch (low complexity) spans 802–814 (ESGSKAGSHSGSN). The segment covering 817-829 (AKTDSIEGFHTES) has biased composition (basic and acidic residues). Positions 841–851 (ATVTGNSVANP) are enriched in polar residues. Residues Asn897 and Asn913 are each glycosylated (N-linked (GlcNAc...) asparagine). A lipid anchor (GPI-anchor amidated asparagine) is attached at Asn913. The propeptide at 914–937 (GSSIVTGGKSILFGLIVSMVVLFM) is removed in mature form.

The protein resides in the cell membrane. The protein localises to the secreted. Its subcellular location is the cell wall. Nonessential component of the hyphal cell wall. The protein is Hyphally-regulated protein (HYR1) of Candida albicans (Yeast).